The sequence spans 213 residues: Adenylate kinase (213 aa).

Residue 10–15 (GAGKGT) participates in ATP binding. Positions 30–59 (STGDMFRAAMANQTEMGLLAKSYIDKGDLV) are NMP. Residues Thr31, Arg36, 57-59 (DLV), 86-89 (GYPR), and Gln93 each bind AMP. The segment at 127–160 (GRIIHKKTGETFHKIFNPPAGDYDENDYYQREDD) is LID. Residues Arg128 and 137-138 (TF) each bind ATP. The AMP site is built by Arg157 and Arg168. Gln196 lines the ATP pocket.

Belongs to the adenylate kinase family. Monomer.

It localises to the cytoplasm. It catalyses the reaction AMP + ATP = 2 ADP. It functions in the pathway purine metabolism; AMP biosynthesis via salvage pathway; AMP from ADP: step 1/1. Functionally, catalyzes the reversible transfer of the terminal phosphate group between ATP and AMP. Plays an important role in cellular energy homeostasis and in adenine nucleotide metabolism. This chain is Adenylate kinase, found in Streptococcus uberis (strain ATCC BAA-854 / 0140J).